The chain runs to 231 residues: Allergen Ani s 10 (231 aa).

An N-terminal signal peptide occupies residues 1–19 (MHLITALVLLLQLIHFITS). A run of 7 repeats spans residues 28–56 (GGPGPVVGGSGIGNVWEKANEQAAEQQNI), 57–85 (GGPGPVISGSGIGDVWNKANEPAEQQENI), 86–114 (GGPGPVVSGSGIGNVWEKANEQAAHQQSI), 115–143 (EGPGPVVSGSGIGNVWEKANEQAAHQQSI), 144–172 (EGPGPVVSGSGIGDVWNKANEQAAEQQNI), 173–201 (GGPGPVISGSGIGNVWEKANEQAAEQQNI), and 204–231 (GGPGPVKSGSGIGNVWEETNEEAASMQA). Residues 28–201 (GGPGPVVGGS…NEQAAEQQNI (174 aa)) form a 6 X 29 AA tandem repeats of [EG]-G-P-G-P-V-[IV]-[SG]-G-S-G-I-G-[ND]-V-W-[NE]-K-A-N-E-[QP]-A-[AE]-[QEH]-Q-[EQ]-[NS]-I region. Disordered regions lie at residues 107 to 126 (QAAHQQSIEGPGPVVSGSGI) and 134 to 231 (NEQA…SMQA). Composition is skewed to low complexity over residues 114 to 123 (IEGPGPVVSG), 143 to 152 (IEGPGPVVSG), and 177 to 187 (PVISGSGIGNV).

This Anisakis simplex (Herring worm) protein is Allergen Ani s 10.